We begin with the raw amino-acid sequence, 363 residues long: Spermidine/putrescine import ATP-binding protein PotA (363 aa).

Residues 6 to 236 (VEFKNVIKKY…PINHFVADFI (231 aa)) enclose the ABC transporter domain. 38-45 (GPSGCGKT) lines the ATP pocket.

It belongs to the ABC transporter superfamily. Spermidine/putrescine importer (TC 3.A.1.11.1) family. As to quaternary structure, the complex is composed of two ATP-binding proteins (PotA), two transmembrane proteins (PotB and PotC) and a solute-binding protein (PotD).

It localises to the cell membrane. It carries out the reaction ATP + H2O + polyamine-[polyamine-binding protein]Side 1 = ADP + phosphate + polyamineSide 2 + [polyamine-binding protein]Side 1.. Functionally, part of the ABC transporter complex PotABCD involved in spermidine/putrescine import. Responsible for energy coupling to the transport system. The sequence is that of Spermidine/putrescine import ATP-binding protein PotA from Latilactobacillus sakei subsp. sakei (strain 23K) (Lactobacillus sakei subsp. sakei).